Here is a 339-residue protein sequence, read N- to C-terminus: Adenylosuccinate synthetase (339 aa).

GTP is bound by residues 12–18 and 42–44; these read GDEGKGS and GHS. The Proton acceptor role is filled by Asp13. Mg(2+) is bound by residues Asp13 and Gly42. IMP-binding positions include 13–16, 40–43, Thr127, Arg141, Gln179, Thr194, and Arg256; these read DEGK and NAGH. Residue His43 is the Proton donor of the active site. 252–258 is a binding site for substrate; that stretch reads TVTGRRR. GTP is bound by residues Arg258, 284-286, and 324-326; these read MLD and KTG.

It belongs to the adenylosuccinate synthetase family. Homodimer. The cofactor is Mg(2+).

It is found in the cytoplasm. It catalyses the reaction IMP + L-aspartate + GTP = N(6)-(1,2-dicarboxyethyl)-AMP + GDP + phosphate + 2 H(+). The protein operates within purine metabolism; AMP biosynthesis via de novo pathway; AMP from IMP: step 1/2. In terms of biological role, plays an important role in the de novo pathway of purine nucleotide biosynthesis. Catalyzes the first committed step in the biosynthesis of AMP from IMP. The protein is Adenylosuccinate synthetase of Thermococcus onnurineus (strain NA1).